The chain runs to 267 residues: Farnesyl diphosphate phosphatase YisP (267 aa).

This sequence belongs to the phytoene/squalene synthase family. In terms of assembly, monomer.

It carries out the reaction (2E,6E)-farnesyl diphosphate + H2O = (2E,6E)-farnesol + diphosphate. With respect to regulation, diphosphate release from FPP is inhibited by zaragozic acid. A farnesyl diphosphate (FPP) phosphatase. Involved in biofilm formation, its disruption blocks biofilm synthesis which is restored by exogenous farnesol. Releases diphosphate from FPP, was initally suggested to be a squalene synthase. Diphosphate release is higher from FPP than geranyl pyrophosphate (GPP) or geranylgeranyl pyrophosphate (GGPP). Biofilm synthesis is partially restored by exogenous squalene, beta-carotene or retinol. Required for integrity of cell membrane lipid rafts. Involved in spatial organization of membranes, required for the flotillin-like proteins FloT and FloA to function correctly. This chain is Farnesyl diphosphate phosphatase YisP (yisP), found in Bacillus subtilis (strain 168).